Reading from the N-terminus, the 407-residue chain is Peptidase T (407 aa).

His82 lines the Zn(2+) pocket. Asp84 is an active-site residue. Asp143 provides a ligand contact to Zn(2+). The Proton acceptor role is filled by Glu177. Zn(2+) contacts are provided by Glu178, Asp200, and His382.

Belongs to the peptidase M20B family. Requires Zn(2+) as cofactor.

The protein resides in the cytoplasm. It carries out the reaction Release of the N-terminal residue from a tripeptide.. Its function is as follows. Cleaves the N-terminal amino acid of tripeptides. The polypeptide is Peptidase T (Streptococcus pyogenes serotype M6 (strain ATCC BAA-946 / MGAS10394)).